The primary structure comprises 160 residues: Cytochrome b6-f complex subunit 4 (160 aa).

Transmembrane regions (helical) follow at residues 36–56 (LLYIFPVCIFGTIACTVGLSV), 95–115 (LLGVLLMAGVPVGLLTVPFIE), and 131–151 (TVFLLGTVVAIWLGIGAALPI).

The protein belongs to the cytochrome b family. PetD subfamily. The 4 large subunits of the cytochrome b6-f complex are cytochrome b6, subunit IV (17 kDa polypeptide, petD), cytochrome f and the Rieske protein, while the 4 small subunits are petG, petL, petM and petN. The complex functions as a dimer.

The protein resides in the plastid. The protein localises to the chloroplast thylakoid membrane. Its function is as follows. Component of the cytochrome b6-f complex, which mediates electron transfer between photosystem II (PSII) and photosystem I (PSI), cyclic electron flow around PSI, and state transitions. The protein is Cytochrome b6-f complex subunit 4 of Chaetosphaeridium globosum (Charophycean green alga).